A 291-amino-acid chain; its full sequence is MKKIDSWLTKHGLKNRLTLVVIVIFIIFLILLFMFVNLSDEDTGQITITENAELRTGPNAAYPVIYKIEKGESFKKIDRKGKWIEVQNHAGTEKGWVAGWHTNLNIPADQSLSSNPLKGKTIVLDPGHGGSDQGASSSTPSKSLEKNYTLKTAKELKKLLNKEGAHVKMTRSNDKYVSLDDRNIKGDAFISIHNDALDSSNANGVTVYWFKDKQESLAQTLNSAIQKKALLTNRGSRQQNYQVLRQTDIPAVLLELGYISNPTDESMINDQLHRQVVEQAIVDGLKQYFSS.

The first 40 residues, 1–40, serve as a signal peptide directing secretion; that stretch reads MKKIDSWLTKHGLKNRLTLVVIVIFIIFLILLFMFVNLSD. Residues 41–105 form the SH3b domain; it reads EDTGQITITE…WVAGWHTNLN (65 aa). One can recognise a MurNAc-LAA domain in the interval 122–286; sequence IVLDPGHGGS…VEQAIVDGLK (165 aa). The interval 123 to 147 is disordered; it reads VLDPGHGGSDQGASSSTPSKSLEKN. Residues 133–142 are compositionally biased toward polar residues; sequence QGASSSTPSK.

It belongs to the N-acetylmuramoyl-L-alanine amidase 3 family.

The protein resides in the secreted. Probably involved in cell-wall metabolism. The sequence is that of Probable cell wall amidase LytH (lytH) from Staphylococcus epidermidis (strain ATCC 12228 / FDA PCI 1200).